The chain runs to 504 residues: Anaerobic nitric oxide reductase transcription regulator NorR (504 aa).

Position 57 is a 4-aspartylphosphate (Asp-57). In terms of domain architecture, Sigma-54 factor interaction spans 187-416 (MIGLSPGMTQ…LEHAIHRAVV (230 aa)). ATP contacts are provided by residues 215–222 (GETGTGKE) and 278–287 (ADNGTLFLDE). Residues 479–498 (WAACARMLETDVANLHRLAK) constitute a DNA-binding region (H-T-H motif).

It participates in nitrogen metabolism; nitric oxide reduction. Its function is as follows. Required for the expression of anaerobic nitric oxide (NO) reductase, acts as a transcriptional activator for at least the norVW operon. Activation also requires sigma-54. The sequence is that of Anaerobic nitric oxide reductase transcription regulator NorR from Escherichia coli O127:H6 (strain E2348/69 / EPEC).